The chain runs to 59 residues: Single-pass membrane and coiled-coil domain-containing protein 4 (59 aa).

The tract at residues 1–23 is disordered; that stretch reads MRQLKGKPKKETSKDKKERKQAM. A compositionally biased stretch (basic and acidic residues) spans 9 to 22; it reads KKETSKDKKERKQA. Residues 9–31 adopt a coiled-coil conformation; that stretch reads KKETSKDKKERKQAMQEARQQIT. A helical membrane pass occupies residues 32 to 52; sequence TVVLPTLAVVVALIVVFVYVA.

The protein belongs to the SMCO4 family.

The protein localises to the membrane. The polypeptide is Single-pass membrane and coiled-coil domain-containing protein 4 (smco4) (Xenopus laevis (African clawed frog)).